Reading from the N-terminus, the 164-residue chain is Peptide methionine sulfoxide reductase MsrA (164 aa).

Cys16 is an active-site residue.

It belongs to the MsrA Met sulfoxide reductase family.

It catalyses the reaction L-methionyl-[protein] + [thioredoxin]-disulfide + H2O = L-methionyl-(S)-S-oxide-[protein] + [thioredoxin]-dithiol. The catalysed reaction is [thioredoxin]-disulfide + L-methionine + H2O = L-methionine (S)-S-oxide + [thioredoxin]-dithiol. Its function is as follows. Has an important function as a repair enzyme for proteins that have been inactivated by oxidation. Catalyzes the reversible oxidation-reduction of methionine sulfoxide in proteins to methionine. The sequence is that of Peptide methionine sulfoxide reductase MsrA from Methanoculleus marisnigri (strain ATCC 35101 / DSM 1498 / JR1).